The primary structure comprises 451 residues: Tubulin gamma-2 chain (451 aa).

Phosphoserine; by BRSK1 is present on Ser131. 142–148 (AGGTGSG) provides a ligand contact to GTP.

It belongs to the tubulin family. Component of the gamma-tubulin ring complex (gTuRC) consisting of TUBGCP2, TUBGCP3, TUBGCP4, TUBGCP5 and TUBGCP6 and gamma-tubulin TUBG1 or TUBG2. TUBGCP2, TUBGCP3, TUBGCP4, TUBGCP5 and TUBGCP6 assemble in a 5:5:2:1:1 stoichiometry; each is associated with a gamma-tubulin, thereby arranging 14 gamma-tubulins in a helical manner. Gamma-tubulin at the first position is blocked by TUBGCP3 at the last position, allowing 13 protafilaments to grow into a microtubule. Interacts with alpha-beta tubulin heterodimers; the interaction allows microtubules to nucleate from the gTuRC. Phosphorylation at Ser-131 by BRSK1 regulates centrosome duplication, possibly by mediating relocation of gamma-tubulin and its associated proteins from the cytoplasm to the centrosome.

The protein localises to the cytoplasm. It localises to the cytoskeleton. The protein resides in the microtubule organizing center. It is found in the centrosome. Functionally, tubulin is the major constituent of microtubules, protein filaments consisting of alpha- and beta-tubulin heterodimers. Gamma-tubulin is a key component of the gamma-tubulin ring complex (gTuRC) which mediates microtubule nucleation. The gTuRC regulates the minus-end nucleation of alpha-beta tubulin heterodimers that grow into microtubule protafilaments, a critical step in centrosome duplication and spindle formation. This Homo sapiens (Human) protein is Tubulin gamma-2 chain (TUBG2).